The primary structure comprises 219 residues: Leukocyte surface antigen CD53 (219 aa).

Over 1–11 (MGMSSLKLLKF) the chain is Cytoplasmic. The chain crosses the membrane as a helical span at residues 12–32 (VLFFFNLIFWFCGCCILGLGI). The Extracellular segment spans residues 33-54 (YLLIHSKFGVLFHNLPSLTLGN). The helical transmembrane segment at 55-69 (VLVIVGSVIMVVAFL) threads the bilayer. Topologically, residues 70-80 (GCMGSIKENKC) are cytoplasmic. The chain crosses the membrane as a helical span at residues 81–106 (LLMSFFVLLLIILLAEVTLAILLFVY). Residues 107-181 (EQKLKEYVAE…IQAKQWFHSN (75 aa)) are Extracellular-facing. Residues asparagine 129 and asparagine 148 are each glycosylated (N-linked (GlcNAc...) asparagine). The chain crosses the membrane as a helical span at residues 182–206 (FLYIGITTICVCVIQVLGMSFALTL). At 207-219 (NCQIDKTSQVLGL) the chain is on the cytoplasmic side.

Belongs to the tetraspanin (TM4SF) family. In terms of assembly, interacts with SCIMP. Interacts with CD45/PTPRC. Interacts with IL7R. Interacts with RBL2 and PPP2CA.

Its subcellular location is the cell membrane. The protein resides in the cell junction. The protein localises to the membrane. It is found in the synapse. Its function is as follows. Structural component of specialized membrane microdomains known as tetraspanin-enriched microdomains (TERMs), which act as platforms for receptor clustering and signaling. Participates thereby in diverse biological functions such as cell signal transduction, adhesion, migration and protein trafficking. Plays a role in the activation of monocytes and B-cells. Acts as an essential regulator of B-cell development by promoting interleukin-7 receptor/IL7R signaling. Also promotes, in B-cells, the BCR signaling by recruiting PKC to the plasma membrane in order to phosphorylate its substrates. Plays an essential role in B- and T-cells homing to lymph nodes by stabilizing L-selectin/SELL cell surface expression. Also mediates metabolic and inflammatory functions in hepatocytes and adipose tissue by promoting TNF-alpha and LPS signaling independent of the immune compartment. The polypeptide is Leukocyte surface antigen CD53 (CD53) (Bos taurus (Bovine)).